The primary structure comprises 224 residues: 4-aminobenzoate synthase (224 aa).

Fe(2+) is bound by residues Glu77, His84, Glu138, His169, Asp173, and His176.

It belongs to the CADD family. As to quaternary structure, homodimer. It depends on Fe(2+) as a cofactor. Mn(2+) serves as cofactor.

Its function is as follows. Involved in de novo para-aminobenzoate (PABA) biosynthesis. Acts as a self-sacrificing or 'suicide' enzyme that utilizes its own active site tyrosine residue(s) as the substrate for PABA synthesis. The side chain of the tyrosine residue is released from the protein backbone via cleavage of the C(alpha)-C(beta) bond, leaving a glycine in place of the original tyrosine residue. Reaction requires O(2) and a reduced dimetal cofactor. The polypeptide is 4-aminobenzoate synthase (Chlamydia pneumoniae (Chlamydophila pneumoniae)).